We begin with the raw amino-acid sequence, 525 residues long: Averantin hydroxylase (525 aa).

The helical transmembrane segment at 36-56 (VLATFVAGIGALLLWTLTTVF) threads the bilayer. N315 is a glycosylation site (N-linked (GlcNAc...) asparagine). Residue C462 participates in heme binding.

Belongs to the cytochrome P450 family. Requires heme as cofactor.

The protein localises to the membrane. The enzyme catalyses (1'S)-averantin + reduced [NADPH--hemoprotein reductase] + O2 = (1'S,5'R)-5'-hydroxyaverantin + oxidized [NADPH--hemoprotein reductase] + H2O. It catalyses the reaction (1'S)-averantin + reduced [NADPH--hemoprotein reductase] + O2 = (1'S,5'S)-5'-hydroxyaverantin + oxidized [NADPH--hemoprotein reductase] + H2O + H(+). It participates in mycotoxin biosynthesis. Averantin hydroxylase; part of the fragmented gene cluster that mediates the biosynthesis of dothistromin (DOTH), a polyketide toxin very similar in structure to the aflatoxin precursor, versicolorin B. The first step of the pathway is the conversion of acetate to norsolorinic acid (NOR) and requires the fatty acid synthase subunits hexA and hexB, as well as the polyketide synthase pksA. PksA combines a hexanoyl starter unit and 7 malonyl-CoA extender units to synthesize the precursor NOR. The hexanoyl starter unit is provided to the acyl-carrier protein (ACP) domain by the fungal fatty acid synthase hexA/hexB. The second step is the conversion of NOR to averantin (AVN) and requires the norsolorinic acid ketoreductase nor1, which catalyzes the dehydration of norsolorinic acid to form (1'S)-averantin. The cytochrome P450 monooxygenase avnA then catalyzes the hydroxylation of AVN to 5'hydroxyaverantin (HAVN). The next step is performed by adhA that transforms HAVN to averufin (AVF). Averufin might then be converted to hydroxyversicolorone by cypX and avfA. Hydroxyversicolorone is further converted versiconal hemiacetal acetate (VHA) by moxY. VHA is then the substrate for the versiconal hemiacetal acetate esterase est1 to yield versiconal (VAL). Versicolorin B synthase vbsA then converts VAL to versicolorin B (VERB) by closing the bisfuran ring. Then, the activity of the versicolorin B desaturase verB leads to versicolorin A (VERA). DotB, a predicted chloroperoxidase, may perform epoxidation of the A-ring of VERA. Alternatively, a cytochrome P450, such as cypX or avnA could catalyze this step. It is also possible that another, uncharacterized, cytochrome P450 enzyme is responsible for this step. Opening of the epoxide could potentially be achieved by the epoxide hydrolase epoA. However, epoA seems not to be required for DOTH biosynthesis, but other epoxide hydrolases may have the ability to complement this hydrolysis. Alternatively, opening of the epoxide ring could be achieved non-enzymatically. The next step is the deoxygenation of ring A to yield the 5,8-dihydroxyanthraquinone which is most likely catalyzed by the NADPH dehydrogenase encoded by ver1. The last stages of DOTH biosynthesis are proposed to involve hydroxylation of the bisfuran. OrdB and norB might have oxidative roles here. An alternative possibility is that cytochrome P450 monoogenases such as avnA and cypX might perform these steps in addition to previously proposed steps. This is Averantin hydroxylase from Dothistroma septosporum (strain NZE10 / CBS 128990) (Red band needle blight fungus).